Here is a 386-residue protein sequence, read N- to C-terminus: Putrescine N-methyltransferase 4 (386 aa).

Polar residues-rich tracts occupy residues 1–14 (MEVI…STIF), 23–48 (GHQS…GHHN), and 57–87 (HQNG…NGNE). The tract at residues 1–87 (MEVISTNTNG…GTISHDNGNE (87 aa)) is disordered. Residues 97–334 (LGWFSEFSAL…GVIGYMLCST (238 aa)) form the PABS domain. S-adenosyl-L-methionine is bound by residues glutamine 128, glutamate 203, and 234 to 235 (DG). Aspartate 253 (proton acceptor) is an active-site residue. Tyrosine 322 contributes to the S-adenosyl-L-methionine binding site.

Belongs to the class I-like SAM-binding methyltransferase superfamily. Putrescine methyltransferase family. In terms of tissue distribution, predominantly expressed in roots.

It carries out the reaction putrescine + S-adenosyl-L-methionine = N-methylputrescine + S-adenosyl-L-homocysteine + H(+). Its pathway is alkaloid biosynthesis; nicotine biosynthesis. Functionally, involved in the biosynthesis of pyridine alkaloid natural products, leading mainly to the production of anabasine, anatabine, nicotine and nornicotine, effective deterrents against herbivores with antiparasitic and pesticide properties (neurotoxins); nornicotine serves as the precursor in the synthesis of the carcinogen compound N'-nitrosonornicotine (NNN). Methyltransferase that mediates the conversion of putrescine to N-methylputrescine. Promotes leaves ripening. The sequence is that of Putrescine N-methyltransferase 4 from Nicotiana tabacum (Common tobacco).